The primary structure comprises 172 residues: Shikimate kinase (172 aa).

Position 11–16 (Gly11–Ala16) interacts with ATP. Position 15 (Thr15) interacts with Mg(2+). Positions 33, 57, and 79 each coordinate substrate. Residue Arg117 participates in ATP binding. Arg136 is a binding site for substrate.

Belongs to the shikimate kinase family. In terms of assembly, monomer. Mg(2+) serves as cofactor.

It is found in the cytoplasm. The catalysed reaction is shikimate + ATP = 3-phosphoshikimate + ADP + H(+). The protein operates within metabolic intermediate biosynthesis; chorismate biosynthesis; chorismate from D-erythrose 4-phosphate and phosphoenolpyruvate: step 5/7. Functionally, catalyzes the specific phosphorylation of the 3-hydroxyl group of shikimic acid using ATP as a cosubstrate. The chain is Shikimate kinase from Pelotomaculum thermopropionicum (strain DSM 13744 / JCM 10971 / SI).